We begin with the raw amino-acid sequence, 179 residues long: Stathmin-2 (179 aa).

Positions 1–26 (MAKTAMAYKEKMKELSMLSLICSCFY) are membrane attachment. Residues Ser16, Ser50, Ser62, Ser73, Ser80, and Ser97 each carry the phosphoserine modification. Positions 38–179 (DDMEVKQINK…NKELQVELSG (142 aa)) constitute an SLD domain. Residues 39–96 (DMEVKQINKRASGQAFELILKPPSPVSEAPRTLASPKKKELSLEEIQKKLEAAEERRK) are regulatory/phosphorylation domain. The stretch at 74 to 179 (PKKKELSLEE…NKELQVELSG (106 aa)) forms a coiled coil.

Belongs to the stathmin family. As to expression, expression is neuron-specific and found in cerebellum, forebrain, midbrain, tectum and spinal cord.

It is found in the cytoplasm. The protein localises to the perinuclear region. It localises to the cell projection. The protein resides in the growth cone. Its subcellular location is the membrane. It is found in the axon. The protein localises to the lamellipodium. In terms of biological role, is a key regulator of neurite extension through regulation of microtubule instabilily. This Gallus gallus (Chicken) protein is Stathmin-2 (STMN2).